The following is a 263-amino-acid chain: Probable adenylate kinase 7, mitochondrial (263 aa).

The transit peptide at 1-30 directs the protein to the mitochondrion; that stretch reads MAWLSRVRGVSPVTRLAAIRRSFGSAAALE. 72–77 contributes to the ATP binding site; sequence GAWRHV. The interval 92 to 121 is NMP; the sequence is SMGSLVRQELNPRSSLYKEIASAVNERKLV. AMP contacts are provided by residues Arg98, 119–121, 149–152, Gln156, and Arg206; these read KLV and GIPR. An ATP-binding site is contributed by Gly234.

It belongs to the adenylate kinase family. Monomer.

The protein resides in the mitochondrion. The catalysed reaction is AMP + ATP = 2 ADP. Functionally, catalyzes the reversible transfer of the terminal phosphate group between ATP and AMP. Plays an important role in cellular energy homeostasis and in adenine nucleotide metabolism. The sequence is that of Probable adenylate kinase 7, mitochondrial from Arabidopsis thaliana (Mouse-ear cress).